Here is a 90-residue protein sequence, read N- to C-terminus: Protein LIM1 (90 aa).

Positions 1-26 (MASMKSLATAILVVLLLAALSREGRS) are cleaved as a signal peptide. Intrachain disulfides connect cysteine 29-cysteine 66, cysteine 39-cysteine 55, cysteine 56-cysteine 81, and cysteine 68-cysteine 88.

It belongs to the A9/FIL1 family.

The protein localises to the secreted. The polypeptide is Protein LIM1 (LIM1) (Lilium longiflorum (Trumpet lily)).